Consider the following 367-residue polypeptide: Ribosomal lysine N-methyltransferase 5 (367 aa).

S-adenosyl-L-methionine is bound by residues W110, 170–172, D192, W256, and M288; that span reads GAG.

This sequence belongs to the class I-like SAM-binding methyltransferase superfamily. RKM5 family.

Functionally, S-adenosyl-L-methionine-dependent protein-lysine N-methyltransferase that monomethylates 60S ribosomal protein L1 (RPL1A and RPL1B) at 'Lys-46'. This is Ribosomal lysine N-methyltransferase 5 (RKM5) from Saccharomyces cerevisiae (strain JAY291) (Baker's yeast).